We begin with the raw amino-acid sequence, 36 residues long: Photosystem I reaction center subunit VIII (36 aa).

The chain crosses the membrane as a helical span at residues 9-29; sequence ILVPLVGLIFPAFSMALFFLY.

It belongs to the PsaI family.

It localises to the plastid. The protein localises to the chloroplast thylakoid membrane. In terms of biological role, may help in the organization of the PsaL subunit. The protein is Photosystem I reaction center subunit VIII of Thalassiosira pseudonana (Marine diatom).